Consider the following 198-residue polypeptide: Dual specificity protein phosphatase 14 (198 aa).

One can recognise a Tyrosine-protein phosphatase domain in the interval 26–167; it reads GIAQITSSLF…LIDYERQLFG (142 aa). Cys111 functions as the Phosphocysteine intermediate in the catalytic mechanism.

Belongs to the protein-tyrosine phosphatase family. Non-receptor class dual specificity subfamily. As to quaternary structure, interacts with CD28.

The catalysed reaction is O-phospho-L-tyrosyl-[protein] + H2O = L-tyrosyl-[protein] + phosphate. It catalyses the reaction O-phospho-L-seryl-[protein] + H2O = L-seryl-[protein] + phosphate. It carries out the reaction O-phospho-L-threonyl-[protein] + H2O = L-threonyl-[protein] + phosphate. Its function is as follows. Involved in the inactivation of MAP kinases. Dephosphorylates ERK, JNK and p38 MAP-kinases. Plays a negative role in TCR signaling by dephosphorylating MAP3K7 adapter TAB1 leading to its inactivation. This Homo sapiens (Human) protein is Dual specificity protein phosphatase 14 (DUSP14).